The chain runs to 487 residues: Protein nucleotidyltransferase YdiU (487 aa).

Residues Gly90, Gly92, Arg93, Lys113, Asp125, Gly126, Arg176, and Arg183 each coordinate ATP. The Proton acceptor role is filled by Asp252. Asn253 and Asp262 together coordinate Mg(2+). Asp262 is an ATP binding site.

It belongs to the SELO family. Mg(2+) serves as cofactor. Mn(2+) is required as a cofactor.

It catalyses the reaction L-seryl-[protein] + ATP = 3-O-(5'-adenylyl)-L-seryl-[protein] + diphosphate. The catalysed reaction is L-threonyl-[protein] + ATP = 3-O-(5'-adenylyl)-L-threonyl-[protein] + diphosphate. The enzyme catalyses L-tyrosyl-[protein] + ATP = O-(5'-adenylyl)-L-tyrosyl-[protein] + diphosphate. It carries out the reaction L-histidyl-[protein] + UTP = N(tele)-(5'-uridylyl)-L-histidyl-[protein] + diphosphate. It catalyses the reaction L-seryl-[protein] + UTP = O-(5'-uridylyl)-L-seryl-[protein] + diphosphate. The catalysed reaction is L-tyrosyl-[protein] + UTP = O-(5'-uridylyl)-L-tyrosyl-[protein] + diphosphate. Its function is as follows. Nucleotidyltransferase involved in the post-translational modification of proteins. It can catalyze the addition of adenosine monophosphate (AMP) or uridine monophosphate (UMP) to a protein, resulting in modifications known as AMPylation and UMPylation. This Pseudomonas fluorescens (strain Pf0-1) protein is Protein nucleotidyltransferase YdiU.